A 230-amino-acid chain; its full sequence is Protein FAM3A (230 aa).

A signal peptide spans 1–33; sequence MRLAGPLRIVVLVVSVGVTWIVVSILLGGPGSG. 2 disulfides stabilise this stretch: C59/C87 and C65/C222. The GG-type lectin domain occupies 68–226; that stretch reads EHLAFRVVSG…LEMEGCIPRR (159 aa).

It belongs to the FAM3 family. As to expression, in similar amounts in testis, pancreas, adrenal, placenta, brain, fetal brain, liver, kidney, skeletal muscle and heart.

It localises to the secreted. May act as a defensin against invading fungal microorganisms. This chain is Protein FAM3A (FAM3A), found in Homo sapiens (Human).